We begin with the raw amino-acid sequence, 268 residues long: Small ribosomal subunit protein eS1 (268 aa).

The interval 1-21 is disordered; that stretch reads MAVGKNKGLSKGGKKGGKKKV.

It belongs to the eukaryotic ribosomal protein eS1 family. In terms of assembly, component of the small ribosomal subunit. Mature ribosomes consist of a small (40S) and a large (60S) subunit. The 40S subunit contains about 33 different proteins and 1 molecule of RNA (18S). The 60S subunit contains about 49 different proteins and 3 molecules of RNA (28S, 5.8S and 5S).

Its subcellular location is the cytoplasm. Its function is as follows. Essential for oogenesis; required for late follicle cell development. This is Small ribosomal subunit protein eS1 from Drosophila sechellia (Fruit fly).